Reading from the N-terminus, the 482-residue chain is ATP synthase subunit beta (482 aa).

Position 161–168 (161–168) interacts with ATP; the sequence is GGAGVGKT.

The protein belongs to the ATPase alpha/beta chains family. In terms of assembly, F-type ATPases have 2 components, CF(1) - the catalytic core - and CF(0) - the membrane proton channel. CF(1) has five subunits: alpha(3), beta(3), gamma(1), delta(1), epsilon(1). CF(0) has four main subunits: a(1), b(1), b'(1) and c(9-12).

The protein resides in the cellular thylakoid membrane. The catalysed reaction is ATP + H2O + 4 H(+)(in) = ADP + phosphate + 5 H(+)(out). Produces ATP from ADP in the presence of a proton gradient across the membrane. The catalytic sites are hosted primarily by the beta subunits. The sequence is that of ATP synthase subunit beta from Microcystis aeruginosa (strain NIES-843 / IAM M-2473).